Reading from the N-terminus, the 872-residue chain is Alanine--tRNA ligase (872 aa).

Zn(2+)-binding residues include His-567, His-571, Cys-669, and His-673.

This sequence belongs to the class-II aminoacyl-tRNA synthetase family. Requires Zn(2+) as cofactor.

The protein localises to the cytoplasm. The catalysed reaction is tRNA(Ala) + L-alanine + ATP = L-alanyl-tRNA(Ala) + AMP + diphosphate. Catalyzes the attachment of alanine to tRNA(Ala) in a two-step reaction: alanine is first activated by ATP to form Ala-AMP and then transferred to the acceptor end of tRNA(Ala). Also edits incorrectly charged Ser-tRNA(Ala) and Gly-tRNA(Ala) via its editing domain. This chain is Alanine--tRNA ligase, found in Streptococcus pyogenes serotype M12 (strain MGAS2096).